The chain runs to 558 residues: Protein NRT1/ PTR FAMILY 2.7 (558 aa).

The next 12 membrane-spanning stretches (helical) occupy residues phenylalanine 31–isoleucine 51, isoleucine 63–alanine 83, phenylalanine 90–leucine 110, leucine 140–alanine 162, phenylalanine 178–valine 198, isoleucine 204–phenylalanine 224, isoleucine 319–leucine 339, isoleucine 357–asparagine 377, valine 399–lysine 419, valine 440–glycine 460, serine 479–isoleucine 499, and valine 518–tryptophan 538.

This sequence belongs to the major facilitator superfamily. Proton-dependent oligopeptide transporter (POT/PTR) (TC 2.A.17) family. In terms of tissue distribution, expressed in shoots and in the cortex of mature roots. Not expressed in root tip meristematic cells.

The protein localises to the cell membrane. Functionally, transporter involved in a passive nitrate efflux. Not competent for chloride transport. The chain is Protein NRT1/ PTR FAMILY 2.7 (NPF2.7) from Arabidopsis thaliana (Mouse-ear cress).